The chain runs to 405 residues: GTPase Obg (405 aa).

Positions 1–159 (MKFVDEVSIF…RDLKLELKVL (159 aa)) constitute an Obg domain. The disordered stretch occupies residues 127–148 (NTRFKSSTNRAPRQTTPGKPGE). The segment covering 129–143 (RFKSSTNRAPRQTTP) has biased composition (polar residues). The region spanning 160-333 (ADVGLLGLPN…LCQDIMHYLD (174 aa)) is the OBG-type G domain. Residues 166–173 (GLPNAGKS), 191–195 (FTTLV), 213–216 (DIPG), 283–286 (NKAD), and 314–316 (SAL) contribute to the GTP site. Residues serine 173 and threonine 193 each contribute to the Mg(2+) site. Positions 383–398 (ALEDEDDFDDEDDGDG) are enriched in acidic residues. A disordered region spans residues 383–405 (ALEDEDDFDDEDDGDGPEIFYVR).

Belongs to the TRAFAC class OBG-HflX-like GTPase superfamily. OBG GTPase family. Monomer. Mg(2+) serves as cofactor.

The protein localises to the cytoplasm. An essential GTPase which binds GTP, GDP and possibly (p)ppGpp with moderate affinity, with high nucleotide exchange rates and a fairly low GTP hydrolysis rate. Plays a role in control of the cell cycle, stress response, ribosome biogenesis and in those bacteria that undergo differentiation, in morphogenesis control. This chain is GTPase Obg, found in Azotobacter vinelandii (strain DJ / ATCC BAA-1303).